The sequence spans 365 residues: Flagellar P-ring protein (365 aa).

Positions 1 to 19 are cleaved as a signal peptide; the sequence is MIKFLSALILLLVTTAAQA.

The protein belongs to the FlgI family. The basal body constitutes a major portion of the flagellar organelle and consists of four rings (L,P,S, and M) mounted on a central rod.

Its subcellular location is the periplasm. The protein localises to the bacterial flagellum basal body. In terms of biological role, assembles around the rod to form the L-ring and probably protects the motor/basal body from shearing forces during rotation. The protein is Flagellar P-ring protein of Shigella dysenteriae serotype 1 (strain Sd197).